A 316-amino-acid polypeptide reads, in one-letter code: Spermidine synthase (316 aa).

A PABS domain is found at 25-262 (PGWFSEISPM…GVIGFMLCST (238 aa)). Gln-56 is a binding site for S-adenosyl 3-(methylsulfanyl)propylamine. Putrescine is bound at residue Tyr-86. S-adenosyl 3-(methylsulfanyl)propylamine contacts are provided by residues Gln-87, Asp-111, Glu-131, 162–163 (DG), and Asp-181. The active-site Proton acceptor is Asp-181. Residues 181–184 (DSSD) and Tyr-250 each bind putrescine.

Belongs to the spermidine/spermine synthase family.

It carries out the reaction S-adenosyl 3-(methylsulfanyl)propylamine + putrescine = S-methyl-5'-thioadenosine + spermidine + H(+). It functions in the pathway amine and polyamine biosynthesis; spermidine biosynthesis; spermidine from putrescine: step 1/1. The chain is Spermidine synthase from Coffea arabica (Arabian coffee).